Reading from the N-terminus, the 262-residue chain is Pyridoxine 5'-phosphate synthase (262 aa).

N6 contacts 3-amino-2-oxopropyl phosphate. 1-deoxy-D-xylulose 5-phosphate is bound at residue 8–9 (DH). R17 serves as a coordination point for 3-amino-2-oxopropyl phosphate. Residue H43 is the Proton acceptor of the active site. The 1-deoxy-D-xylulose 5-phosphate site is built by R45 and H50. The Proton acceptor role is filled by E70. T102 serves as a coordination point for 1-deoxy-D-xylulose 5-phosphate. Catalysis depends on H215, which acts as the Proton donor. Residues G216 and 237–238 (GH) each bind 3-amino-2-oxopropyl phosphate.

It belongs to the PNP synthase family. In terms of assembly, homooctamer; tetramer of dimers.

The protein localises to the cytoplasm. The enzyme catalyses 3-amino-2-oxopropyl phosphate + 1-deoxy-D-xylulose 5-phosphate = pyridoxine 5'-phosphate + phosphate + 2 H2O + H(+). Its pathway is cofactor biosynthesis; pyridoxine 5'-phosphate biosynthesis; pyridoxine 5'-phosphate from D-erythrose 4-phosphate: step 5/5. Functionally, catalyzes the complicated ring closure reaction between the two acyclic compounds 1-deoxy-D-xylulose-5-phosphate (DXP) and 3-amino-2-oxopropyl phosphate (1-amino-acetone-3-phosphate or AAP) to form pyridoxine 5'-phosphate (PNP) and inorganic phosphate. The sequence is that of Pyridoxine 5'-phosphate synthase from Helicobacter pylori (strain J99 / ATCC 700824) (Campylobacter pylori J99).